Reading from the N-terminus, the 47-residue chain is uncharacterized protein (47 aa).

The N-terminal stretch at Met-1–Ala-18 is a signal peptide. The disordered stretch occupies residues Glu-28–Gln-47.

This is an uncharacterized protein from Haemophilus influenzae (strain ATCC 51907 / DSM 11121 / KW20 / Rd).